A 139-amino-acid polypeptide reads, in one-letter code: Cystatin-1 (139 aa).

The N-terminal stretch at 1-22 is a signal peptide; that stretch reads MHSRLPVPASLCLLLLLPSVLP. A Cystatin domain is found at 27–127; it reads GGLSPRDVTD…CHFEVWSRPW (101 aa). A Secondary area of contact motif is present at residues 71-75; it reads QVVSG. Disulfide bonds link Cys89–Cys105 and Cys118–Cys138.

Belongs to the cystatin family. In terms of tissue distribution, expressed by the venom gland.

It is found in the secreted. Functionally, inhibits various C1 cysteine proteases including cathepsin L, papain and cathepsin B. This protein has no toxic activity and its function in the venom is unknown. It may play a role as housekeeping or regulatory protein. In Crotalus adamanteus (Eastern diamondback rattlesnake), this protein is Cystatin-1.